The primary structure comprises 151 residues: Deoxyuridine 5'-triphosphate nucleotidohydrolase (151 aa).

Residues 70-72 (RSG), asparagine 83, 87-89 (LID), and methionine 97 contribute to the substrate site.

It belongs to the dUTPase family. Mg(2+) serves as cofactor.

It carries out the reaction dUTP + H2O = dUMP + diphosphate + H(+). Its pathway is pyrimidine metabolism; dUMP biosynthesis; dUMP from dCTP (dUTP route): step 2/2. Its function is as follows. This enzyme is involved in nucleotide metabolism: it produces dUMP, the immediate precursor of thymidine nucleotides and it decreases the intracellular concentration of dUTP so that uracil cannot be incorporated into DNA. This is Deoxyuridine 5'-triphosphate nucleotidohydrolase from Pseudomonas putida (strain ATCC 700007 / DSM 6899 / JCM 31910 / BCRC 17059 / LMG 24140 / F1).